Reading from the N-terminus, the 199-residue chain is Recombination protein RecR (199 aa).

The segment at 57 to 72 (CSVCGNITEDDPCPIC) adopts a C4-type zinc-finger fold. Residues 80-176 (SRVLVVERSR…KVTRLAHGLS (97 aa)) form the Toprim domain.

Belongs to the RecR family.

In terms of biological role, may play a role in DNA repair. It seems to be involved in an RecBC-independent recombinational process of DNA repair. It may act with RecF and RecO. The chain is Recombination protein RecR from Limosilactobacillus fermentum (strain NBRC 3956 / LMG 18251) (Lactobacillus fermentum).